Consider the following 431-residue polypeptide: Glucose-1-phosphate adenylyltransferase (431 aa).

Lysine 39 is a beta-D-fructose 1,6-bisphosphate binding site. AMP-binding residues include arginine 40, histidine 46, and arginine 52. Residue tyrosine 114 coordinates alpha-D-glucose 1-phosphate. AMP is bound at residue arginine 130. Residues glycine 179, 194–195 (EK), and serine 212 each bind alpha-D-glucose 1-phosphate. AMP is bound by residues glutamate 370 and arginine 386. Residues 419–423 (REMLR) and 429–431 (QER) each bind beta-D-fructose 1,6-bisphosphate.

The protein belongs to the bacterial/plant glucose-1-phosphate adenylyltransferase family. Homotetramer.

The catalysed reaction is alpha-D-glucose 1-phosphate + ATP + H(+) = ADP-alpha-D-glucose + diphosphate. It functions in the pathway glycan biosynthesis; glycogen biosynthesis. Allosterically activated by fructose-1,6-bisphosphate (F16BP) and inhibited by AMP. Involved in the biosynthesis of ADP-glucose, a building block required for the elongation reactions to produce glycogen. Catalyzes the reaction between ATP and alpha-D-glucose 1-phosphate (G1P) to produce pyrophosphate and ADP-Glc. The chain is Glucose-1-phosphate adenylyltransferase from Escherichia coli O45:K1 (strain S88 / ExPEC).